Consider the following 450-residue polypeptide: Molybdate-anion transporter (450 aa).

The next 12 membrane-spanning stretches (helical) occupy residues 1-21 (MLVT…GLEL), 43-63 (LDFY…APYL), 79-99 (ILYV…SSLV), 128-148 (FVLL…FSAF), 174-194 (AAFW…AVAS), 195-215 (WIGL…ALAG), 249-269 (VLLL…FVFL), 278-298 (GAPL…GSSL), 311-331 (PMHL…MLTF), 344-364 (FIAF…MSFL), 376-396 (GVLN…LLVL), and 409-429 (FSIC…LFTV).

This sequence belongs to the major facilitator superfamily. In terms of tissue distribution, expressed ubiquitously but at relatively higher levels in the olfactory bulb and the skeletal muscle.

It is found in the cell membrane. Its function is as follows. Mediates high-affinity intracellular uptake of the rare oligo-element molybdenum. This is Molybdate-anion transporter (MFSD5) from Homo sapiens (Human).